We begin with the raw amino-acid sequence, 319 residues long: HTH-type transcriptional regulator YidZ (319 aa).

The region spanning 8–65 (LDLNLLLCLQLLMQERSVTKAAKRMNVTPSAVSKSLAKLRAWFDDPLFVNTPLGLAPT) is the HTH lysR-type domain. The segment at residues 25–44 (VTKAAKRMNVTPSAVSKSLA) is a DNA-binding region (H-T-H motif).

The protein belongs to the LysR transcriptional regulatory family.

Functionally, involved in anaerobic NO protection. The sequence is that of HTH-type transcriptional regulator YidZ from Salmonella heidelberg (strain SL476).